A 261-amino-acid chain; its full sequence is Proteasome subunit alpha type-4 (261 aa).

Residues serine 13 and serine 75 each carry the phosphoserine modification. Lysine 127 carries the N6-acetyllysine modification. Serine 173 is subject to Phosphoserine. Lysine 176 bears the N6-acetyllysine mark. A disordered region spans residues histidine 240–lysine 261.

Belongs to the peptidase T1A family. In terms of assembly, the 26S proteasome consists of a 20S proteasome core and two 19S regulatory subunits. The 20S proteasome core is a barrel-shaped complex made of 28 subunits that are arranged in four stacked rings. The two outer rings are each formed by seven alpha subunits, and the two inner rings are formed by seven beta subunits. The proteolytic activity is exerted by three beta-subunits PSMB5, PSMB6 and PSMB7. In terms of tissue distribution, ubiquitous.

The protein resides in the cytoplasm. It localises to the nucleus. In terms of biological role, component of the 20S core proteasome complex involved in the proteolytic degradation of most intracellular proteins. This complex plays numerous essential roles within the cell by associating with different regulatory particles. Associated with two 19S regulatory particles, forms the 26S proteasome and thus participates in the ATP-dependent degradation of ubiquitinated proteins. The 26S proteasome plays a key role in the maintenance of protein homeostasis by removing misfolded or damaged proteins that could impair cellular functions, and by removing proteins whose functions are no longer required. Associated with the PA200 or PA28, the 20S proteasome mediates ubiquitin-independent protein degradation. This type of proteolysis is required in several pathways including spermatogenesis (20S-PA200 complex) or generation of a subset of MHC class I-presented antigenic peptides (20S-PA28 complex). The sequence is that of Proteasome subunit alpha type-4 (Psma4) from Rattus norvegicus (Rat).